Consider the following 839-residue polypeptide: Molybdenum cofactor sulfurase (839 aa).

Lys-237 carries the N6-(pyridoxal phosphate)lysine modification. Cys-401 is an active-site residue. Polar residues predominate over residues 651-662 (DQNYSQKQSPSM). The disordered stretch occupies residues 651 to 678 (DQNYSQKQSPSMPGSFPQAPSSPDPYPT). Positions 656 to 834 (QKQSPSMPGS…IMVGDAVTPS (179 aa)) constitute an MOSC domain.

The protein belongs to the class-V pyridoxal-phosphate-dependent aminotransferase family. MOCOS subfamily. Requires pyridoxal 5'-phosphate as cofactor.

The catalysed reaction is Mo-molybdopterin + L-cysteine + AH2 = thio-Mo-molybdopterin + L-alanine + A + H2O. The protein operates within cofactor biosynthesis; molybdopterin biosynthesis. Sulfurates the molybdenum cofactor. Sulfation of molybdenum is essential for xanthine dehydrogenase (XDH) and aldehyde oxidase (ADO) enzymes in which molybdenum cofactor is liganded by 1 oxygen and 1 sulfur atom in active form. This chain is Molybdenum cofactor sulfurase, found in Emericella nidulans (strain FGSC A4 / ATCC 38163 / CBS 112.46 / NRRL 194 / M139) (Aspergillus nidulans).